Here is a 244-residue protein sequence, read N- to C-terminus: Uridylate kinase (244 aa).

11-14 (KLSG) contacts ATP. An involved in allosteric activation by GTP region spans residues 19–24 (GSLGYG). Position 53 (Gly-53) interacts with UMP. Gly-54 and Arg-58 together coordinate ATP. Residues Asp-73 and 134 to 141 (SGNPFFTT) contribute to the UMP site. ATP contacts are provided by Thr-161, Tyr-167, and Asp-170.

Belongs to the UMP kinase family. In terms of assembly, homohexamer.

The protein resides in the cytoplasm. It catalyses the reaction UMP + ATP = UDP + ADP. It participates in pyrimidine metabolism; CTP biosynthesis via de novo pathway; UDP from UMP (UMPK route): step 1/1. With respect to regulation, allosterically activated by GTP. Inhibited by UTP. Its function is as follows. Catalyzes the reversible phosphorylation of UMP to UDP. This is Uridylate kinase from Trichodesmium erythraeum (strain IMS101).